Here is a 514-residue protein sequence, read N- to C-terminus: GTPase Obg (514 aa).

One can recognise an Obg domain in the interval 2–159 (ATFVDRVTVH…GDILLELKTV (158 aa)). Residues 62–88 (RRPHRSSGNGGFGMGDHRSGHTGEDLE) form a disordered region. A compositionally biased stretch (basic and acidic residues) spans 76-85 (GDHRSGHTGE). In terms of domain architecture, OBG-type G spans 160–336 (ADIALVGYPS…LSFALAELVE (177 aa)). GTP contacts are provided by residues 166 to 173 (GYPSAGKS), 191 to 195 (FTTLH), 212 to 215 (DVPG), 288 to 291 (NKID), and 317 to 319 (STV). Mg(2+) contacts are provided by serine 173 and threonine 193. In terms of domain architecture, OCT spans 356–440 (PKTVDDSGFV…ENGVVFDWEP (85 aa)).

This sequence belongs to the TRAFAC class OBG-HflX-like GTPase superfamily. OBG GTPase family. As to quaternary structure, monomer. Mg(2+) serves as cofactor.

It is found in the cytoplasm. Its function is as follows. An essential GTPase which binds GTP, GDP and possibly (p)ppGpp with moderate affinity, with high nucleotide exchange rates and a fairly low GTP hydrolysis rate. Plays a role in control of the cell cycle, stress response, ribosome biogenesis and in those bacteria that undergo differentiation, in morphogenesis control. The protein is GTPase Obg of Leifsonia xyli subsp. xyli (strain CTCB07).